The chain runs to 137 residues: ATP synthase epsilon chain (137 aa).

The protein belongs to the ATPase epsilon chain family. F-type ATPases have 2 components, CF(1) - the catalytic core - and CF(0) - the membrane proton channel. CF(1) has five subunits: alpha(3), beta(3), gamma(1), delta(1), epsilon(1). CF(0) has three main subunits: a, b and c.

It is found in the cell inner membrane. In terms of biological role, produces ATP from ADP in the presence of a proton gradient across the membrane. In Yersinia pestis bv. Antiqua (strain Antiqua), this protein is ATP synthase epsilon chain.